A 94-amino-acid chain; its full sequence is Co-chaperonin GroES (94 aa).

This sequence belongs to the GroES chaperonin family. In terms of assembly, heptamer of 7 subunits arranged in a ring. Interacts with the chaperonin GroEL.

It localises to the cytoplasm. Its function is as follows. Together with the chaperonin GroEL, plays an essential role in assisting protein folding. The GroEL-GroES system forms a nano-cage that allows encapsulation of the non-native substrate proteins and provides a physical environment optimized to promote and accelerate protein folding. GroES binds to the apical surface of the GroEL ring, thereby capping the opening of the GroEL channel. The polypeptide is Co-chaperonin GroES (Anoxybacillus flavithermus (strain DSM 21510 / WK1)).